A 531-amino-acid chain; its full sequence is Tyrosine 2,3-aminomutase (531 aa).

Tyr51 serves as the catalytic Proton donor/acceptor. Residue His81 participates in substrate binding. The segment at residues 140–142 (ASG) is a cross-link (5-imidazolinone (Ala-Gly)). Position 141 is a 2,3-didehydroalanine (Ser) (Ser141). Substrate is bound by residues Asn193 and Arg298.

It belongs to the TAL/TAM family. Homotetramer; dimer of dimers. Post-translationally, contains an active site 4-methylidene-imidazol-5-one (MIO), which is formed autocatalytically by cyclization and dehydration of residues Ala-Ser-Gly.

It catalyses the reaction L-tyrosine = 3-amino-3-(4-hydroxyphenyl)propanoate. The enzyme catalyses L-tyrosine = (E)-4-coumarate + NH4(+). Its function is as follows. Has aminomutase and, to a lesser extent, ammonia-lyase activity. Primarily, catalyzes the rearrangement of L-tyrosine to R-beta-tyrosine, which is incorporated into secondary metabolites called chondramides. The aminomutase activity mainly produces R-beta-tyrosine but also S-beta tyrosine in smaller amounts. Does not accept D-tyrosine, L-histidine or L-phenylalanine as substrates. This Chondromyces crocatus protein is Tyrosine 2,3-aminomutase.